A 209-amino-acid polypeptide reads, in one-letter code: N-(5'-phosphoribosyl)anthranilate isomerase (209 aa).

Belongs to the TrpF family.

It catalyses the reaction N-(5-phospho-beta-D-ribosyl)anthranilate = 1-(2-carboxyphenylamino)-1-deoxy-D-ribulose 5-phosphate. Its pathway is amino-acid biosynthesis; L-tryptophan biosynthesis; L-tryptophan from chorismate: step 3/5. The polypeptide is N-(5'-phosphoribosyl)anthranilate isomerase (Pyrobaculum islandicum (strain DSM 4184 / JCM 9189 / GEO3)).